A 329-amino-acid chain; its full sequence is GTPase Obg (329 aa).

The Obg domain occupies 1–159 (MQFIDQAIID…WSLQLELKLL (159 aa)). In terms of domain architecture, OBG-type G spans 160–328 (AEVGIIGLPN…LLSSIWNELG (169 aa)). Residues 166-173 (GLPNAGKS), 191-195 (FTTLI), 213-216 (DIPG), 280-283 (NKKE), and 309-311 (SAV) contribute to the ATP site. Mg(2+)-binding residues include Ser173 and Thr193.

It belongs to the TRAFAC class OBG-HflX-like GTPase superfamily. OBG GTPase family. In terms of assembly, monomer. It depends on Mg(2+) as a cofactor.

It is found in the cytoplasm. In terms of biological role, an essential GTPase which binds GTP, GDP and possibly (p)ppGpp with moderate affinity, with high nucleotide exchange rates and a fairly low GTP hydrolysis rate. Plays a role in control of the cell cycle, stress response, ribosome biogenesis and in those bacteria that undergo differentiation, in morphogenesis control. The chain is GTPase Obg from Prochlorococcus marinus (strain NATL2A).